The primary structure comprises 565 residues: Oxygen-dependent choline dehydrogenase (565 aa).

FAD is bound at residue 6–35 (DYIIIGAGSAGNVLATRLTEDADVSVLLLE). His475 (proton acceptor) is an active-site residue. The interval 541 to 565 (RSNAPYFVAGERPVRGQPQRAVSAA) is disordered.

It belongs to the GMC oxidoreductase family. It depends on FAD as a cofactor.

It catalyses the reaction choline + A = betaine aldehyde + AH2. It carries out the reaction betaine aldehyde + NAD(+) + H2O = glycine betaine + NADH + 2 H(+). Its pathway is amine and polyamine biosynthesis; betaine biosynthesis via choline pathway; betaine aldehyde from choline (cytochrome c reductase route): step 1/1. Involved in the biosynthesis of the osmoprotectant glycine betaine. Catalyzes the oxidation of choline to betaine aldehyde and betaine aldehyde to glycine betaine at the same rate. The chain is Oxygen-dependent choline dehydrogenase from Ectopseudomonas mendocina (strain ymp) (Pseudomonas mendocina).